Reading from the N-terminus, the 688-residue chain is MRAAEERKGVVPAARRRDQFPVGMRVLAVDDDPVCLKVLETLLLRCQYHVTTTNQAAIALKMLRENRDMFDLVISDVHMPDMDGFKLLELVGLEMDLPVIMLSVNGETKTVLKGITHGACDYLLKPVRIEELRNIWQHVIRRKFSTRDRANLDFYEECNKPPNADSDHVHGHVTCGSPDQSGRPSKKRKEYCSEEEDEGEVNTQDIDDPSAPKKPRVVWSVELHRKFVAAVNQLGIDKAVPKRILELMNVEKLTRENVASHLQKYRLYLKRLSAVASQQVSIVAALGGRDPFLHMGGFEGLQGYQAFTSSAALSSFTPHGLLNSPRNNPAALGTQGVPASKSIQTMSGSHTLSHSINDANKYHLSLPGNQKGNLGQGLAASLGQTQMQQKWIHEETDDLSTILSGNGLSNGMSGTLQSVTSSPLLPQELAECTQAKIVSQPSIRTSSVSSEHIEGAVGVSSGLLESRVSQQSTIPLSGFSANGLLIHGSFNNTCANKLGGTSSSCAPARSSNDLMVARDTKGGASSFGGAMLLPPDTEQKYLNFGGGNGLKQKFDDRTADSLFDPKFVWSSVPSSQLASNIGAHHAMSQRWNNSSSNSSNIGARMIGQATSSGSTVIPQMKTDFLVSGDMAMPKNASDLSIPKLQSELSSSSCSFDGLLNSIVKVEKDDVTFSDDLGCGDFYSLGACI.

The Response regulatory domain maps to 25–140 (RVLAVDDDPV…ELRNIWQHVI (116 aa)). Asp-76 carries the post-translational modification 4-aspartylphosphate. Residues 161–212 (PPNADSDHVHGHVTCGSPDQSGRPSKKRKEYCSEEEDEGEVNTQDIDDPSAP) form a disordered region. Positions 193-208 (SEEEDEGEVNTQDIDD) are enriched in acidic residues. Positions 211–270 (APKKPRVVWSVELHRKFVAAVNQLGIDKAVPKRILELMNVEKLTRENVASHLQKYRLYLK) form a DNA-binding region, myb-like GARP.

The protein belongs to the ARR family. Type-B subfamily. In terms of processing, two-component system major event consists of a His-to-Asp phosphorelay between a sensor histidine kinase (HK) and a response regulator (RR). In plants, the His-to-Asp phosphorelay involves an additional intermediate named Histidine-containing phosphotransfer protein (HPt). This multistep phosphorelay consists of a His-Asp-His-Asp sequential transfer of a phosphate group between first a His and an Asp of the HK protein, followed by the transfer to a conserved His of the HPt protein and finally the transfer to an Asp in the receiver domain of the RR protein.

It localises to the nucleus. In terms of biological role, transcriptional activator that binds specific DNA sequence. Functions as a response regulator involved in His-to-Asp phosphorelay signal transduction system. Phosphorylation of the Asp residue in the receiver domain activates the ability of the protein to promote the transcription of target genes. May directly activate some type-A response regulators in response to cytokinins. The sequence is that of Two-component response regulator ORR23 from Oryza sativa subsp. indica (Rice).